We begin with the raw amino-acid sequence, 361 residues long: Aminomethyltransferase (361 aa).

Belongs to the GcvT family. The glycine cleavage system is composed of four proteins: P, T, L and H.

The enzyme catalyses N(6)-[(R)-S(8)-aminomethyldihydrolipoyl]-L-lysyl-[protein] + (6S)-5,6,7,8-tetrahydrofolate = N(6)-[(R)-dihydrolipoyl]-L-lysyl-[protein] + (6R)-5,10-methylene-5,6,7,8-tetrahydrofolate + NH4(+). Functionally, the glycine cleavage system catalyzes the degradation of glycine. In Herpetosiphon aurantiacus (strain ATCC 23779 / DSM 785 / 114-95), this protein is Aminomethyltransferase.